Reading from the N-terminus, the 198-residue chain is MAGVEKIKERILEEARAQAEANIKRAEEEAAKIIEEAQKEAAAKKAQILEKAKQEAVDVKKRLKAMAELEARKKKLQARQEVVDEAFNKTIEKLNSLPDREYEEIISQMIVNSVESGSEEIILSPKDKQRISPGFIENINKKLSQKGIDGKIKLSEETKNISGGFILKSGDIEINNSFEAIIRMKREEVEAEVIKALF.

Belongs to the V-ATPase E subunit family.

Its function is as follows. Produces ATP from ADP in the presence of a proton gradient across the membrane. This Acetivibrio thermocellus (strain ATCC 27405 / DSM 1237 / JCM 9322 / NBRC 103400 / NCIMB 10682 / NRRL B-4536 / VPI 7372) (Clostridium thermocellum) protein is V-type ATP synthase subunit E.